The sequence spans 260 residues: Small ribosomal subunit protein uS2 (260 aa).

The protein belongs to the universal ribosomal protein uS2 family.

The chain is Small ribosomal subunit protein uS2 from Staphylococcus carnosus (strain TM300).